We begin with the raw amino-acid sequence, 419 residues long: Putative zinc metalloprotease SPs1691 (419 aa).

A Zn(2+)-binding site is contributed by His-18. Residue Glu-19 is part of the active site. Residue His-22 coordinates Zn(2+). Helical transmembrane passes span Leu-169–Val-191, Leu-301–Asn-323, Leu-343–Ile-365, and Ala-392–Trp-411. The region spanning Gly-175 to Lys-274 is the PDZ domain.

Belongs to the peptidase M50B family. It depends on Zn(2+) as a cofactor.

It localises to the cell membrane. This Streptococcus pyogenes serotype M3 (strain SSI-1) protein is Putative zinc metalloprotease SPs1691 (eep).